The following is a 400-amino-acid chain: Formate-dependent phosphoribosylglycinamide formyltransferase (400 aa).

N(1)-(5-phospho-beta-D-ribosyl)glycinamide contacts are provided by residues 22–23 (EL) and Glu82. Residues Arg115, Lys157, 162–167 (SSGKGQ), 197–200 (EGFV), and Glu205 each bind ATP. The region spanning 120 to 315 (RLAAETLGLP…EFELHARAIL (196 aa)) is the ATP-grasp domain. Glu274 and Glu286 together coordinate Mg(2+). N(1)-(5-phospho-beta-D-ribosyl)glycinamide-binding positions include Asp293, Lys362, and 369–370 (RR).

It belongs to the PurK/PurT family. In terms of assembly, homodimer.

The catalysed reaction is N(1)-(5-phospho-beta-D-ribosyl)glycinamide + formate + ATP = N(2)-formyl-N(1)-(5-phospho-beta-D-ribosyl)glycinamide + ADP + phosphate + H(+). It participates in purine metabolism; IMP biosynthesis via de novo pathway; N(2)-formyl-N(1)-(5-phospho-D-ribosyl)glycinamide from N(1)-(5-phospho-D-ribosyl)glycinamide (formate route): step 1/1. Its function is as follows. Involved in the de novo purine biosynthesis. Catalyzes the transfer of formate to 5-phospho-ribosyl-glycinamide (GAR), producing 5-phospho-ribosyl-N-formylglycinamide (FGAR). Formate is provided by PurU via hydrolysis of 10-formyl-tetrahydrofolate. The protein is Formate-dependent phosphoribosylglycinamide formyltransferase of Mycolicibacterium gilvum (strain PYR-GCK) (Mycobacterium gilvum (strain PYR-GCK)).